The chain runs to 300 residues: Putative lysophosphatidic acid:oleoyl-CoA acyltransferase (300 aa).

The chain crosses the membrane as a helical span at residues 32 to 52 (WILIVVVMILRVPLCIISVTL). An HXXXXD motif motif is present at residues 115 to 120 (HSSPLD).

It belongs to the 1-acyl-sn-glycerol-3-phosphate acyltransferase family.

The protein localises to the lipid droplet. It is found in the endoplasmic reticulum membrane. It localises to the golgi apparatus membrane. It catalyses the reaction a 1-acyl-sn-glycero-3-phosphate + an acyl-CoA = a 1,2-diacyl-sn-glycero-3-phosphate + CoA. Acyl-CoA-dependent lysophosphatidic acid acyltransferase with preference for oleoyl-CoA. Involved in triacylglyceride homeostasis and lipid droplet formation. Involved in vacuolar protein sorting. In Schizosaccharomyces pombe (strain 972 / ATCC 24843) (Fission yeast), this protein is Putative lysophosphatidic acid:oleoyl-CoA acyltransferase (vps66).